We begin with the raw amino-acid sequence, 516 residues long: MSPIYTTLTLHLATALFLFFHVQKLVHYLHGKATGHRCRRLPPGPTGWPILGALPLLGNMPHVTFANMAKKYGSVMYLKVGSHGLAIASTPDAAKAFLKTLDLNFSNRPPNAGATHLAYNAQDMVFAHYGPKWKLLRKLSNLHMLGGKALENWADVRKTELGYMLKAMFESSQNNEPVMISEMLTYAMANMLSQVILSRRVFNKKGAKSNEFKDMVVELMTSAGYFNIGDFIPSIGWMDLQGIEGGMKRLHKKFDVLLTRLLDDHKRTSQERKQKPDFLDFVIANGDNSDGERLNTDNIKALLLNLFTAGTDTSSSIIEWALAELLKNRTLLTRAQDEMDRVIGRDRRLLESDIPNLPYLQAICKETFRKHPSTPLNLPRNCIRGHVDVNGYYIPKGTRLNVNIWAIGRDPSVWGDNPNEFDPERFLYGRNAKIDPRGNHFELIPFGAGRRICAGTRMGILLVEYILGTLVHSFDWKLGFSEDELNMDETFGLALQKAVPLAAMVIPRLPLHVYAP.

Cysteine 453 is a binding site for heme.

The protein belongs to the cytochrome P450 family. It depends on heme as a cofactor.

The enzyme catalyses a 3',5'-unsubstituted flavanone + 2 reduced [NADPH--hemoprotein reductase] + 2 O2 = a 3',5'-dihydroxyflavanone + 2 oxidized [NADPH--hemoprotein reductase] + 2 H2O + 2 H(+). It functions in the pathway pigment biosynthesis; anthocyanin biosynthesis. Catalyzes the 3'5'-hydroxylation of naringenin and eriodictyol to form 5,7,3,'4',5'-pentahydroxyflavanone and 3',5'-hydroxylation of dihydrokaempferol and dihydroquercetin to form dihydromyricetin. The chain is Flavonoid 3',5'-hydroxylase (CYP75A4) from Gentiana triflora (Clustered gentian).